The primary structure comprises 336 residues: Mitochondrial thiamine pyrophosphate carrier 1 (336 aa).

3 Solcar repeats span residues 11–98 (ISST…VNQV), 112–202 (SSGA…VKDS), and 221–323 (TKGW…SLSI). A run of 6 helical transmembrane segments spans residues 17-37 (MLCG…LDVV), 66-86 (GVTA…FYGA), 118-138 (FIAG…FDLF), 177-197 (GVSS…ASYG), 228-244 (TAGL…VFPL), and 298-315 (GFLV…ITMY).

Belongs to the mitochondrial carrier (TC 2.A.29) family.

The protein localises to the mitochondrion inner membrane. Mitochondrial transporter that mediates uptake of thiamine pyrophosphate (ThPP) into mitochondria. The polypeptide is Mitochondrial thiamine pyrophosphate carrier 1 (TPC1) (Yarrowia lipolytica (strain CLIB 122 / E 150) (Yeast)).